The primary structure comprises 501 residues: Ribose import ATP-binding protein RbsA (501 aa).

ABC transporter domains are found at residues 8 to 245 and 255 to 500; these read LKMV…VGRT and VKKG…VGIN. 40–47 is an ATP binding site; that stretch reads GENGAGKS.

This sequence belongs to the ABC transporter superfamily. Ribose importer (TC 3.A.1.2.1) family. The complex is composed of an ATP-binding protein (RbsA), two transmembrane proteins (RbsC) and a solute-binding protein (RbsB).

Its subcellular location is the cell membrane. The catalysed reaction is D-ribose(out) + ATP + H2O = D-ribose(in) + ADP + phosphate + H(+). Its function is as follows. Part of the ABC transporter complex RbsABC involved in ribose import. Responsible for energy coupling to the transport system. In Clostridium perfringens (strain SM101 / Type A), this protein is Ribose import ATP-binding protein RbsA.